Reading from the N-terminus, the 836-residue chain is Ethylene receptor 3 (836 aa).

The next 3 helical transmembrane spans lie at 137–157 (LIAA…AGLR), 166–186 (LVQF…TAFT), and 204–224 (LTAL…PQLL). Cu cation is bound by residues Cys176 and His180. Positions 269–413 (DRHTVLYTTL…VVAGQVAVAL (145 aa)) constitute a GAF domain. Residues 416 to 452 (ATLLEESRAMRDRLAEQNRELLQARRDALMANEARQA) adopt a coiled-coil conformation. Residues 457-691 (MSQGMRRPIH…LVLRFQLQSP (235 aa)) enclose the Histidine kinase domain. The Response regulatory domain maps to 718-834 (LLIDDDDDIN…LKDELARILQ (117 aa)).

This sequence belongs to the ethylene receptor family. Cu cation is required as a cofactor.

It localises to the endoplasmic reticulum membrane. The enzyme catalyses ATP + protein L-histidine = ADP + protein N-phospho-L-histidine.. Its function is as follows. Ethylene receptor related to bacterial two-component regulators. Acts as a negative regulator of ethylene signaling. May delay the transition from the vegetative stage to the floral stage by up-regulating GI (GIGANTEA) and RCN1 and cause starch accumulation in stems by down-regulating the alpha-amylase AMY3D. This Oryza sativa subsp. indica (Rice) protein is Ethylene receptor 3.